The primary structure comprises 211 residues: MRVHVADHPLVAHKLTVLRDERTDSPTFRRLTEELVTLLAYEATRDIAVEPREITTPVTTTVGVHLRSPRPMVVPILRAGLGMLEGMTRLLPTAEVGFLGLQRDEETLEAITYANRLPDDLSGRQCFVLDPMLATGGTLVASIEYLFLRGARHVTAICLLAAPEGLRTVEDAVGDRADVTIVTAAVDERLNERGYIVPGLGDAGDRLYGVV.

5-phospho-alpha-D-ribose 1-diphosphate-binding positions include R78, R103, and 130–138; that span reads DPMLATGGT. Residues I196 and 201 to 203 each bind uracil; that span reads GDA. D202 contacts 5-phospho-alpha-D-ribose 1-diphosphate.

It belongs to the UPRTase family. The cofactor is Mg(2+).

The enzyme catalyses UMP + diphosphate = 5-phospho-alpha-D-ribose 1-diphosphate + uracil. It functions in the pathway pyrimidine metabolism; UMP biosynthesis via salvage pathway; UMP from uracil: step 1/1. Its activity is regulated as follows. Allosterically activated by GTP. Functionally, catalyzes the conversion of uracil and 5-phospho-alpha-D-ribose 1-diphosphate (PRPP) to UMP and diphosphate. This is Uracil phosphoribosyltransferase from Beutenbergia cavernae (strain ATCC BAA-8 / DSM 12333 / CCUG 43141 / JCM 11478 / NBRC 16432 / NCIMB 13614 / HKI 0122).